The sequence spans 334 residues: Atypical chemokine receptor 1 (334 aa).

The Extracellular portion of the chain corresponds to 1 to 61; the sequence is MGNCLYPVET…CNLLDRSSLP (61 aa). Residues N16, N26, and N32 are each glycosylated (N-linked (GlcNAc...) asparagine). Intrachain disulfides connect C49–C274 and C127–C193. The helical transmembrane segment at 62–82 threads the bilayer; sequence FFMLTSVLGMLASGSILFAIL. Residues 83-93 are Cytoplasmic-facing; that stretch reads RPFFHWQICPS. The helical transmembrane segment at 94–114 threads the bilayer; that stretch reads WPILAELAVGSALFSIAVPIL. Residues 115–127 lie on the Extracellular side of the membrane; the sequence is APGLHSAHSTALC. Residues 128–151 form a helical membrane-spanning segment; that stretch reads NLGYWVWYTSAFAQALLIGCYACL. Residues 152-164 are Cytoplasmic-facing; that stretch reads NPRLNIGQLRGFT. The helical transmembrane segment at 165–185 threads the bilayer; sequence LGLSVGLWGAAALSGLPVALA. Residues 186-205 lie on the Extracellular side of the membrane; sequence SDVYNGFCTFPSSRDMEALK. The chain crosses the membrane as a helical span at residues 206–226; it reads YTHYAICFTIFTVLPLTLLAA. At 227–242 the chain is on the cytoplasmic side; it reads KGLKIALSKGPGPWVS. A helical membrane pass occupies residues 243–263; the sequence is VLWIWFIFWWPHGMVLIFDAL. The Extracellular segment spans residues 264–285; sequence VRSKTVLLYTCQSQKILDAMLN. Residue N285 is glycosylated (N-linked (GlcNAc...) asparagine). A helical transmembrane segment spans residues 286–306; it reads VTEALSMLHCVATPLLLALFC. Over 307–334 the chain is Cytoplasmic; the sequence is HQTTRRSLSSLSLPTRQASQMDALAGKS.

It belongs to the G-protein coupled receptor 1 family. Atypical chemokine receptor subfamily. Expressed in liver and brain.

The protein resides in the early endosome. The protein localises to the recycling endosome. Its subcellular location is the membrane. Functionally, atypical chemokine receptor that controls chemokine levels and localization via high-affinity chemokine binding that is uncoupled from classic ligand-driven signal transduction cascades, resulting instead in chemokine sequestration, degradation, or transcytosis. Also known as interceptor (internalizing receptor) or chemokine-scavenging receptor or chemokine decoy receptor. Has a promiscuous chemokine-binding profile, interacting with inflammatory chemokines of both the CXC and the CC subfamilies but not with homeostatic chemokines. Acts as a receptor for chemokines including CCL2, CCL5, CCL7, CCL11, CCL13, CCL14, CCL17, CXCL5, CXCL6, IL8/CXCL8, CXCL11, GRO, RANTES, MCP-1 and TARC. May regulate chemokine bioavailability and, consequently, leukocyte recruitment through two distinct mechanisms: when expressed in endothelial cells, it sustains the abluminal to luminal transcytosis of tissue-derived chemokines and their subsequent presentation to circulating leukocytes; when expressed in erythrocytes, serves as blood reservoir of cognate chemokines but also as a chemokine sink, buffering potential surges in plasma chemokine levels. In terms of biological role, (Microbial infection) Acts as a receptor for the malaria parasite Plasmodium yoelii in mature erythrocytes but not reticulocytes. The polypeptide is Atypical chemokine receptor 1 (Ackr1) (Mus musculus (Mouse)).